The chain runs to 294 residues: Glycine--tRNA ligase alpha subunit (294 aa).

This sequence belongs to the class-II aminoacyl-tRNA synthetase family. In terms of assembly, tetramer of two alpha and two beta subunits.

It localises to the cytoplasm. The enzyme catalyses tRNA(Gly) + glycine + ATP = glycyl-tRNA(Gly) + AMP + diphosphate. This is Glycine--tRNA ligase alpha subunit from Polynucleobacter asymbioticus (strain DSM 18221 / CIP 109841 / QLW-P1DMWA-1) (Polynucleobacter necessarius subsp. asymbioticus).